Reading from the N-terminus, the 196-residue chain is Signaling threshold-regulating transmembrane adapter 1 (196 aa).

Positions 1 to 24 (MNQADPRLRAVCLWTLTSAAMSRG) are cleaved as a signal peptide. At 25 to 40 (DNCTDLLALGIPSITQ) the chain is on the extracellular side. N-linked (GlcNAc...) asparagine glycosylation occurs at Asn-26. A helical membrane pass occupies residues 41 to 61 (AWGLWVLLGAVTLLFLISLAA). Residues 62–196 (HLSQWTRGRS…AYANSQPAAS (135 aa)) are Cytoplasmic-facing. Ser-80 and Ser-83 each carry phosphoserine. Tyr-90 is subject to Phosphotyrosine. Residues 90-93 (YGNL) form an interaction with GRB2 region. A Phosphoserine modification is found at Ser-102. At Tyr-127 the chain carries Phosphotyrosine. The interval 132–167 (LRPPQGRIPGPGTPVKYSEVVLDSEPKSQASGPEPE) is disordered. At Thr-144 the chain carries Phosphothreonine. Positions 146 to 151 (VKYSEV) are interaction with PTPN11. Phosphotyrosine occurs at positions 148 and 169. Residues 169–172 (YASV) form an interaction with CSK region. Phosphoserine is present on Ser-182. The residue at position 188 (Tyr-188) is a Phosphotyrosine. The interval 188–191 (YANS) is interaction with GRB2.

Homodimer; disulfide-linked. When phosphorylated, interacts with PTPN11/SHP2, GRB2 and CSK. Post-translationally, phosphorylated on tyrosines by LCK, FYN or ZAP70 upon TCR activation; which leads to the recruitment of PTPN11, GRB2 and CSK. As to expression, specifically expressed in T- and B-cells. Present in plasma cells but not in germinal center B-cells (at protein level). Expressed in T- and B-cell lymphoma.

It localises to the cell membrane. Its function is as follows. Negatively regulates TCR (T-cell antigen receptor)-mediated signaling in T-cells. Involved in positive selection of T-cells. This is Signaling threshold-regulating transmembrane adapter 1 (SIT1) from Homo sapiens (Human).